A 218-amino-acid chain; its full sequence is MDVEALLQSIPPLMVYLVVGAVVGIESLGIPLPGEIVLVSAAVLSSHPELAVNPIGVGGAAVIGAVVGDSIGYSIGRRFGLPLFDRLGRRFPKHFGPGHVALAERLFNRWGVRAVFLGRFIALLRIFAGPLAGALKMPYPRFLAANVTGGICWAGGTTALVYFAGMAAQHWLERFSWIALVIAVIAGITAAILLRERTSRAIAELEAEHCRKAGTTAA.

4 consecutive transmembrane segments (helical) span residues 10 to 30 (IPPL…SLGI), 55 to 75 (IGVG…GYSI), 147 to 167 (VTGG…AGMA), and 175 to 195 (FSWI…ILLR).

Belongs to the DedA family.

The protein localises to the cell membrane. This is an uncharacterized protein from Mycobacterium tuberculosis (strain CDC 1551 / Oshkosh).